The following is an 81-amino-acid chain: Photosystem I iron-sulfur center (81 aa).

4Fe-4S ferredoxin-type domains are found at residues 2 to 31 (SHAVKIYDTCIGCTQCVRACPLDVLEMVPW) and 37 to 68 (GQIASSPRTEDCVGCKRCETACPTDFLSIRVY). The [4Fe-4S] cluster site is built by Cys11, Cys14, Cys17, Cys21, Cys48, Cys51, Cys54, and Cys58.

As to quaternary structure, the cyanobacterial PSI reaction center is composed of one copy each of PsaA,B,C,D,E,F,I,J,K,L,M and X, and forms trimeric complexes. Requires [4Fe-4S] cluster as cofactor.

It localises to the cellular thylakoid membrane. The enzyme catalyses reduced [plastocyanin] + hnu + oxidized [2Fe-2S]-[ferredoxin] = oxidized [plastocyanin] + reduced [2Fe-2S]-[ferredoxin]. Functionally, apoprotein for the two 4Fe-4S centers FA and FB of photosystem I (PSI); essential for photochemical activity. FB is the terminal electron acceptor of PSI, donating electrons to ferredoxin. The C-terminus interacts with PsaA/B/D and helps assemble the protein into the PSI complex. Required for binding of PsaD and PsaE to PSI. PSI is a plastocyanin/cytochrome c6-ferredoxin oxidoreductase, converting photonic excitation into a charge separation, which transfers an electron from the donor P700 chlorophyll pair to the spectroscopically characterized acceptors A0, A1, FX, FA and FB in turn. The chain is Photosystem I iron-sulfur center from Synechococcus sp. (strain WH7803).